We begin with the raw amino-acid sequence, 133 residues long: Small ribosomal subunit protein uS8 (133 aa).

The protein belongs to the universal ribosomal protein uS8 family. As to quaternary structure, part of the 30S ribosomal subunit. Contacts proteins S5 and S12.

Functionally, one of the primary rRNA binding proteins, it binds directly to 16S rRNA central domain where it helps coordinate assembly of the platform of the 30S subunit. In Chloroflexus aurantiacus (strain ATCC 29364 / DSM 637 / Y-400-fl), this protein is Small ribosomal subunit protein uS8.